Here is a 358-residue protein sequence, read N- to C-terminus: Dynein axonemal assembly factor 10 (358 aa).

WD repeat units follow at residues 64–106 (EKPK…TPVY), 116–155 (NCID…TPVA), 163–206 (ETKR…VRWE), 208–250 (NIKN…PSKG), 258–298 (AHKS…QRSR), and 320–358 (LSTQ…LNKL).

Interacts with PIH1D1; the interaction associates DNAAF10 with the R2TP complex. Interacts with several dynein axonemal assembly factors.

It localises to the dynein axonemal particle. Key assembly factor specifically required for the stability of axonemal dynein heavy chains in cytoplasm. The chain is Dynein axonemal assembly factor 10 (dnaaf10) from Xenopus tropicalis (Western clawed frog).